Reading from the N-terminus, the 250-residue chain is ATP synthase subunit a (250 aa).

A run of 6 helical transmembrane segments spans residues 27-47 (FTNA…FLTF), 85-105 (FFPL…VGLI), 115-135 (LIVT…YGFV), 141-161 (FLHL…LVVI), 181-201 (MLAG…LASA), and 223-243 (ELLV…IYLN).

The protein belongs to the ATPase A chain family. F-type ATPases have 2 components, CF(1) - the catalytic core - and CF(0) - the membrane proton channel. CF(1) has five subunits: alpha(3), beta(3), gamma(1), delta(1), epsilon(1). CF(0) has three main subunits: a(1), b(2) and c(9-12). The alpha and beta chains form an alternating ring which encloses part of the gamma chain. CF(1) is attached to CF(0) by a central stalk formed by the gamma and epsilon chains, while a peripheral stalk is formed by the delta and b chains.

The protein resides in the cell inner membrane. In terms of biological role, key component of the proton channel; it plays a direct role in the translocation of protons across the membrane. This chain is ATP synthase subunit a, found in Xanthobacter autotrophicus (strain ATCC BAA-1158 / Py2).